A 2372-amino-acid chain; its full sequence is Nonribosomal peptide synthase roqA (2372 aa).

Residues 217 to 610 (EHCRSQPDAE…VGRKDREVKI (394 aa)) are adenylation 1. The disordered stretch occupies residues 723-745 (AASSHSSTREQPSNQRDKEDVEL). The segment covering 725–736 (SSHSSTREQPSN) has biased composition (polar residues). Residues 750 to 823 (SAKENTLCSV…KIARCTAESK (74 aa)) form the Carrier 1 domain. Position 784 is an O-(pantetheine 4'-phosphoryl)serine (serine 784). Positions 856–1122 (EDIYPCTPLQ…FATFPFRTQL (267 aa)) are condensation 1. Positions 1290-1679 (QPNSEAVCAW…VGRKDTQVKL (390 aa)) are adenylation 2. The region spanning 1819–1895 (KPTTEQERFV…LFCKHVILIQ (77 aa)) is the Carrier 2 domain. Serine 1856 is subject to O-(pantetheine 4'-phosphoryl)serine. The segment at 1962 to 2227 (TSNYTSTAIF…FNVLPCRIAI (266 aa)) is condensation 2.

It participates in alkaloid biosynthesis. Its function is as follows. Dipeptide synthase; part of the gene cluster that mediates the biosynthesis of the mycotoxins roquefortine C and meleagrin. The first stage is catalyzed by the dipeptide synthase roqA which condenses histidine and tryptophan to produce histidyltryptophanyldiketopiperazine (HTD). HTD is then converted to roquefortine C through two possible pathways. In the first pathway, prenyltransferase roqD transforms HTD to the intermediate roquefortine D, which is in turn converted to roquefortine C by the cytochrome P450 monooxygenase roqR. In the second pathway, HTD is first converted to the intermediate dehydrohistidyltryptophanyldi-ketopiperazine (DHTD) by roqR which is then prenylated by roqD to form roquefortine C. Roquefortine C can be further transformed to meleagrin via three more reactions including oxydation to glandicolin A by roqM, which is further reduced to glandicoline B by roqO. Finally, glandicoline B is converted to meleagrin by the glandicoline B O-methyltransferase roqN. More studies identified further branching and additional metabolites produced by the roquefortine/meleagrin cluster, including roquefortine F, roquefortine L, roquefortine M, roquefortine N and neoxaline. This is Nonribosomal peptide synthase roqA from Penicillium rubens (strain ATCC 28089 / DSM 1075 / NRRL 1951 / Wisconsin 54-1255) (Penicillium chrysogenum).